We begin with the raw amino-acid sequence, 375 residues long: uncharacterized protein (375 aa).

Over residues 1–12 (MAGNKKQVKKNT) the composition is skewed to basic residues. Disordered stretches follow at residues 1-76 (MAGN…EKKS) and 119-274 (KNKN…KEIK). The segment covering 26–39 (DTSNLDTAVQTSAS) has biased composition (polar residues). Residues 129-141 (TATDGTTTTTNIP) are compositionally biased toward low complexity. The segment covering 175-185 (DETHSHKEEPK) has biased composition (basic and acidic residues). 2 stretches are compositionally biased toward low complexity: residues 198–212 (SKQQATQNVSSSSSS) and 225–241 (PTPTTTTQRTTTTKSTP). A compositionally biased stretch (basic and acidic residues) spans 256–274 (EQPKEKSSPAPVKKEKEIK). A run of 2 helical transmembrane segments spans residues 299-319 (VVYKIIYVALIGVLLFSLVPL) and 327-347 (IYSYGVIALVLGLGISLTLFI). Residues 355 to 375 (ASKEQKSKSGNKKSTTRKVKA) form a disordered region. The segment covering 363–375 (SGNKKSTTRKVKA) has biased composition (basic residues).

It localises to the membrane. This is an uncharacterized protein from Dictyostelium discoideum (Social amoeba).